Consider the following 224-residue polypeptide: Ribosome maturation factor RimP (224 aa).

The interval 194–224 is disordered; that stretch reads REGRIPGDDLGSEEAGEQSDETASGEAEDKE. Residues 203 to 213 show a composition bias toward acidic residues; it reads LGSEEAGEQSD.

Belongs to the RimP family.

It localises to the cytoplasm. Functionally, required for maturation of 30S ribosomal subunits. In Brucella anthropi (strain ATCC 49188 / DSM 6882 / CCUG 24695 / JCM 21032 / LMG 3331 / NBRC 15819 / NCTC 12168 / Alc 37) (Ochrobactrum anthropi), this protein is Ribosome maturation factor RimP.